The sequence spans 803 residues: Leucine--tRNA ligase (803 aa).

Residues 40–51 carry the 'HIGH' region motif; the sequence is PYPSGAGLHVGH. Residues 575-579 carry the 'KMSKS' region motif; that stretch reads KMSKS. Lysine 578 serves as a coordination point for ATP.

The protein belongs to the class-I aminoacyl-tRNA synthetase family.

It localises to the cytoplasm. The catalysed reaction is tRNA(Leu) + L-leucine + ATP = L-leucyl-tRNA(Leu) + AMP + diphosphate. The sequence is that of Leucine--tRNA ligase from Listeria monocytogenes serovar 1/2a (strain ATCC BAA-679 / EGD-e).